We begin with the raw amino-acid sequence, 186 residues long: Interferon beta (186 aa).

The N-terminal stretch at 1–21 is a signal peptide; sequence MTGRCILQIALLVCFFTTAHS. Residue tyrosine 24 is modified to Phosphotyrosine. Asparagine 46, asparagine 101, asparagine 131, and asparagine 136 each carry an N-linked (GlcNAc...) asparagine glycan. A disulfide bond links cysteine 52 and cysteine 161.

Belongs to the alpha/beta interferon family. Monomer.

The protein localises to the secreted. Its function is as follows. Type I interferon cytokine that plays a key role in the innate immune response to infection, developing tumors and other inflammatory stimuli. Signals via binding to high-affinity (IFNAR2) and low-affinity (IFNAR1) heterodimeric receptor, activating the canonical Jak-STAT signaling pathway resulting in transcriptional activation or repression of interferon-regulated genes that encode the effectors of the interferon response, such as antiviral proteins, regulators of cell proliferation and differentiation, and immunoregulatory proteins. Signals mostly via binding to a IFNAR1-IFNAR2 heterodimeric receptor, but can also function with IFNAR1 alone and independently of Jak-STAT pathways. Elicits a wide variety of responses, including antiviral and antibacterial activities, and can regulate the development of B-cells, myelopoiesis and lipopolysaccharide (LPS)-inducible production of tumor necrosis factor. Plays a role in neuronal homeostasis by regulating dopamine turnover and protecting dopaminergic neurons: acts by promoting neuronal autophagy and alpha-synuclein clearance, thereby preventing dopaminergic neuron loss. IFNB1 is more potent than interferon-alpha (IFN-alpha) in inducing the apoptotic and antiproliferative pathways required for control of tumor cell growth. This Felis catus (Cat) protein is Interferon beta (IFNB1).